We begin with the raw amino-acid sequence, 216 residues long: Adenylate kinase (216 aa).

10-15 is an ATP binding site; it reads GAGKGT. The tract at residues 30–59 is NMP; that stretch reads STGDIFRANIKEKTPLGIEAKRYIDNGQLV. AMP is bound by residues Thr31, Arg36, 57-59, 85-88, and Gln92; these read QLV and GFPR. Residues 126 to 163 are LID; sequence GRRVCTSCGASYHIRFNPPKIEGKCDICDNELIQRKDD. Arg127 lines the ATP pocket. Cys130 and Cys133 together coordinate Zn(2+). 136 to 137 serves as a coordination point for ATP; the sequence is SY. Positions 150 and 153 each coordinate Zn(2+). Residues Arg160 and Arg171 each coordinate AMP. Glu199 is a binding site for ATP.

The protein belongs to the adenylate kinase family. In terms of assembly, monomer.

The protein resides in the cytoplasm. The enzyme catalyses AMP + ATP = 2 ADP. Its pathway is purine metabolism; AMP biosynthesis via salvage pathway; AMP from ADP: step 1/1. Its function is as follows. Catalyzes the reversible transfer of the terminal phosphate group between ATP and AMP. Plays an important role in cellular energy homeostasis and in adenine nucleotide metabolism. The polypeptide is Adenylate kinase (Clostridium botulinum (strain 657 / Type Ba4)).